A 177-amino-acid polypeptide reads, in one-letter code: Dual-action ribosomal maturation protein DarP (177 aa).

Residues 1–12 (MKIVGDSEHFKQ) show a composition bias toward basic and acidic residues. The interval 1–26 (MKIVGDSEHFKQPYDSNDEYVSKTED) is disordered.

The protein belongs to the DarP family.

Its subcellular location is the cytoplasm. Member of a network of 50S ribosomal subunit biogenesis factors which assembles along the 30S-50S interface, preventing incorrect 23S rRNA structures from forming. Promotes peptidyl transferase center (PTC) maturation. The sequence is that of Dual-action ribosomal maturation protein DarP from Shewanella oneidensis (strain ATCC 700550 / JCM 31522 / CIP 106686 / LMG 19005 / NCIMB 14063 / MR-1).